The chain runs to 169 residues: MDPLKICENYLTFRSIIKGSTFSPGVFRRWRFHALADVVGNIVEREEGRFWEIVPETHTLWALFRGGFTVAPFTEILTSLQLENRGRQLAFLAFLSFLLRNWPSDSVVSEDARLDLVCAPAWSRIQIWSQAARLINDLPESVFEGQGSVVEEECGEEHLARDSDDPFFD.

It belongs to the adenoviridae E1B 19 kDa protein family.

The sequence is that of E1B protein, small T-antigen from Canis lupus familiaris (Dog).